We begin with the raw amino-acid sequence, 479 residues long: Sulfate adenylyltransferase subunit 1 (479 aa).

The region spanning K25–R239 is the tr-type G domain. Positions G34–S41 are G1. G34 to S41 contributes to the GTP binding site. Residues G92 to D96 form a G2 region. Residues D113 to G116 are G3. Residues D113–H117 and N168–D171 each bind GTP. The tract at residues N168 to D171 is G4. A G5 region spans residues S206–L208.

This sequence belongs to the TRAFAC class translation factor GTPase superfamily. Classic translation factor GTPase family. CysN/NodQ subfamily. Heterodimer composed of CysD, the smaller subunit, and CysN.

The catalysed reaction is sulfate + ATP + H(+) = adenosine 5'-phosphosulfate + diphosphate. Its pathway is sulfur metabolism; hydrogen sulfide biosynthesis; sulfite from sulfate: step 1/3. Functionally, with CysD forms the ATP sulfurylase (ATPS) that catalyzes the adenylation of sulfate producing adenosine 5'-phosphosulfate (APS) and diphosphate, the first enzymatic step in sulfur assimilation pathway. APS synthesis involves the formation of a high-energy phosphoric-sulfuric acid anhydride bond driven by GTP hydrolysis by CysN coupled to ATP hydrolysis by CysD. This chain is Sulfate adenylyltransferase subunit 1, found in Salmonella gallinarum (strain 287/91 / NCTC 13346).